Consider the following 499-residue polypeptide: Aspartyl/glutamyl-tRNA(Asn/Gln) amidotransferase subunit B (499 aa).

The protein belongs to the GatB/GatE family. GatB subfamily. Heterotrimer of A, B and C subunits.

It carries out the reaction L-glutamyl-tRNA(Gln) + L-glutamine + ATP + H2O = L-glutaminyl-tRNA(Gln) + L-glutamate + ADP + phosphate + H(+). It catalyses the reaction L-aspartyl-tRNA(Asn) + L-glutamine + ATP + H2O = L-asparaginyl-tRNA(Asn) + L-glutamate + ADP + phosphate + 2 H(+). Its function is as follows. Allows the formation of correctly charged Asn-tRNA(Asn) or Gln-tRNA(Gln) through the transamidation of misacylated Asp-tRNA(Asn) or Glu-tRNA(Gln) in organisms which lack either or both of asparaginyl-tRNA or glutaminyl-tRNA synthetases. The reaction takes place in the presence of glutamine and ATP through an activated phospho-Asp-tRNA(Asn) or phospho-Glu-tRNA(Gln). The protein is Aspartyl/glutamyl-tRNA(Asn/Gln) amidotransferase subunit B of Salinispora tropica (strain ATCC BAA-916 / DSM 44818 / JCM 13857 / NBRC 105044 / CNB-440).